The chain runs to 231 residues: Cytidylate kinase (231 aa).

Residue 17–25 participates in ATP binding; that stretch reads GPTASGKGT.

It belongs to the cytidylate kinase family. Type 1 subfamily.

The protein resides in the cytoplasm. It carries out the reaction CMP + ATP = CDP + ADP. The enzyme catalyses dCMP + ATP = dCDP + ADP. In Ralstonia pickettii (strain 12J), this protein is Cytidylate kinase.